A 443-amino-acid polypeptide reads, in one-letter code: Crh-like protein 2 (443 aa).

An N-terminal signal peptide occupies residues 1 to 20 (MVRIGSSLLLATLAATTVSA). One can recognise a GH16 domain in the interval 21–306 (ASDPPKCSQD…TVECYDPPSG (286 aa)). A disulfide bond links Cys56 and Cys67. Glu164 (nucleophile) is an active-site residue. Glu168 (proton donor) is an active-site residue. Glu168 serves as a coordination point for chitin. 2 N-linked (GlcNAc...) asparagine glycosylation sites follow: Asn194 and Asn237. Residues Trp257 and Thr268 each coordinate chitin. Asn332 and Asn359 each carry an N-linked (GlcNAc...) asparagine glycan. 2 stretches are compositionally biased toward low complexity: residues 350-367 (ASSS…SANT) and 378-410 (EPGN…SETS). Residues 350–420 (ASSSASGSAN…ASSNKNAAPS (71 aa)) form a disordered region. The segment covering 411–420 (ASSNKNAAPS) has biased composition (polar residues). Asn416 carries GPI-like-anchor amidated asparagine lipidation. Positions 417–443 (AAPSQNERVLNGSFFAVLVAVVALVTL) are cleaved as a propeptide — removed in mature form. Residue Asn427 is glycosylated (N-linked (GlcNAc...) asparagine).

The protein belongs to the glycosyl hydrolase 16 family. CRH1 subfamily. Post-translationally, the GPI-like anchor contains a phosphoceramide lipid group. The anchor position has not been determined.

The protein localises to the cell membrane. The protein resides in the secreted. Its subcellular location is the cell wall. The catalysed reaction is Random endo-hydrolysis of N-acetyl-beta-D-glucosaminide (1-&gt;4)-beta-linkages in chitin and chitodextrins.. Dual chitinase/transglycosylase that plays a role in cell wall architecture. Chitinase and transglycosylase activities are coupled. Required for the polysaccharide cross-linking at the septa and the cell wall. More specifically, transfers chitin to 1,6-beta-glucan in the cell wall. The polypeptide is Crh-like protein 2 (Aspergillus fumigatus (strain ATCC MYA-4609 / CBS 101355 / FGSC A1100 / Af293) (Neosartorya fumigata)).